The sequence spans 908 residues: DNA (cytosine-5)-methyltransferase 3A (908 aa).

The segment covering 1–13 (MPSSGPGDTSSSS) has biased composition (low complexity). 2 disordered regions span residues 1 to 183 (MPSS…PMPR) and 226 to 281 (NQAS…PEYE). Residues 14–37 (LEREDDRKEGEEQEENRGKEERQE) are compositionally biased toward basic and acidic residues. Positions 44–54 (KVGRPGRKRKH) are enriched in basic residues. Polar residues predominate over residues 69 to 80 (TTKSQPMAQDSG). Ser-102 carries the post-translational modification Phosphoserine. Positions 110–124 (GAPAEGEGTETPPEA) are enriched in low complexity. Phosphothreonine is present on Thr-120. A Glycyl lysine isopeptide (Lys-Gly) (interchain with G-Cter in SUMO2) cross-link involves residue Lys-158. Arg-167 carries the omega-N-methylarginine modification. Residues 195 to 399 (SKRKRDEWLA…DSGKAVEVQN (205 aa)) form an interaction with DNMT1 and DNMT3B region. Ser-239 and Ser-251 each carry phosphoserine. Positions 242–256 (AVQQPTDPASPTVAT) are enriched in polar residues. The residue at position 257 (Thr-257) is a Phosphothreonine. Residues 265–275 (AGDKNATKAAD) show a composition bias toward basic and acidic residues. Residues 288-346 (IGELVWGKLRGFSWWPGRIVSWWMTGRSRAAEGTRWVMWFGDGKFSVVCVEKLMPLSSF) form the PWWP domain. A phosphoserine mark is found at Ser-386 and Ser-389. The tract at residues 443 to 462 (AYAPPPPAKKPRKSTTEKPK) is disordered. One can recognise an ADD domain in the interval 478 to 610 (EVRQKCRNIE…LQMFFANNHD (133 aa)). The GATA-type; atypical zinc-finger motif lies at 489-519 (ICISCGSLNVTLEHPLFIGGMCQNCKNCFLE). The interaction with the PRC2/EED-EZH2 complex stretch occupies residues 490 to 582 (CISCGSLNVT…KEDPWNCYMC (93 aa)). The PHD-type; atypical zinc-finger motif lies at 530-586 (QSYCTICCGGREVLMCGNNNCCRCFCVECVDLLVGPGAAQAAIKEDPWNCYMCGHKG). The SAM-dependent MTase C5-type domain occupies 630–908 (IRVLSLFDGI…APLKEYFACV (279 aa)). S-adenosyl-L-methionine is bound by residues 637–641 (DGIAT), Glu-660, and 682–684 (DVR). Cys-706 is an active-site residue. An S-methylcysteine; by autocatalysis modification is found at Cys-706. Residue 887 to 889 (RSW) coordinates S-adenosyl-L-methionine.

Belongs to the class I-like SAM-binding methyltransferase superfamily. C5-methyltransferase family. As to quaternary structure, heterotetramer composed of 1 DNMT3A homodimer and 2 DNMT3L subunits (DNMT3L-DNMT3A-DNMT3A-DNMT3L). Interacts with DNMT1 and DNMT3B. Interacts with MPHOSPH8. Interacts with histone H3 that is not methylated at 'Lys-4' (H3K4). Binds the ZBTB18 transcriptional repressor. Interacts with SETDB1. Associates with HDAC1 through its ADD domain. Interacts with UHRF1. Interacts with the PRC2/EED-EZH2 complex. Interacts with UBC9, PIAS1 and PIAS2. Interacts with SPOCD1. Interacts with ZNF263; recruited to the SIX3 promoter along with other proteins involved in chromatin modification and transcriptional corepression where it contributes to transcriptional repression. In terms of processing, auto-methylated at Cys-706: auto-methylation takes place in absence of DNA substrate and inactivates the DNA methyltransferase activity. Inactivation by auto-methylation may be used to inactivate unused DNA methyltransferases in the cell. Sumoylated; sumoylation disrupts the ability to interact with histone deacetylases (HDAC1 and HDAC2) and repress transcription. As to expression, isoform 1 is expressed ubiquitously at low levels. Expression of isoform 2 is restricted to tissues containing cells which are undergoing active de novo methylation, including spleen, testis and thymus.

The protein localises to the nucleus. It is found in the chromosome. The protein resides in the cytoplasm. The enzyme catalyses a 2'-deoxycytidine in DNA + S-adenosyl-L-methionine = a 5-methyl-2'-deoxycytidine in DNA + S-adenosyl-L-homocysteine + H(+). The catalysed reaction is L-cysteinyl-[protein] + S-adenosyl-L-methionine = S-methyl-L-cysteinyl-[protein] + S-adenosyl-L-homocysteine + H(+). With respect to regulation, activated by binding to the regulatory factor DNMT3L. Auto-methylation at Cys-706 in absence of DNA inactivates the DNA methyltransferase activity. Functionally, required for genome-wide de novo methylation and is essential for the establishment of DNA methylation patterns during development. DNA methylation is coordinated with methylation of histones. It modifies DNA in a non-processive manner and also methylates non-CpG sites. May preferentially methylate DNA linker between 2 nucleosomal cores and is inhibited by histone H1. Plays a role in paternal and maternal imprinting. Required for methylation of most imprinted loci in germ cells. Acts as a transcriptional corepressor for ZBTB18. Recruited to trimethylated 'Lys-36' of histone H3 (H3K36me3) sites. Can actively repress transcription through the recruitment of HDAC activity. Also has weak auto-methylation activity on Cys-706 in absence of DNA. This Mus musculus (Mouse) protein is DNA (cytosine-5)-methyltransferase 3A.